We begin with the raw amino-acid sequence, 155 residues long: Pathogenesis-related protein B (155 aa).

It belongs to the BetVI family.

The chain is Pathogenesis-related protein B (PCPR1-3) from Petroselinum crispum (Parsley).